Consider the following 407-residue polypeptide: Imidazolonepropionase (407 aa).

Residues His-75 and His-77 each coordinate Fe(3+). The Zn(2+) site is built by His-75 and His-77. 4-imidazolone-5-propanoate-binding residues include Arg-84, Tyr-142, and His-169. Tyr-142 contacts N-formimidoyl-L-glutamate. Position 232 (His-232) interacts with Fe(3+). His-232 contributes to the Zn(2+) binding site. Gln-235 contacts 4-imidazolone-5-propanoate. Position 306 (Asp-306) interacts with Fe(3+). Residue Asp-306 participates in Zn(2+) binding. The N-formimidoyl-L-glutamate site is built by Asn-308 and Gly-310. A 4-imidazolone-5-propanoate-binding site is contributed by Thr-311.

Belongs to the metallo-dependent hydrolases superfamily. HutI family. Requires Zn(2+) as cofactor. Fe(3+) serves as cofactor.

The protein resides in the cytoplasm. It catalyses the reaction 4-imidazolone-5-propanoate + H2O = N-formimidoyl-L-glutamate. It functions in the pathway amino-acid degradation; L-histidine degradation into L-glutamate; N-formimidoyl-L-glutamate from L-histidine: step 3/3. Its function is as follows. Catalyzes the hydrolytic cleavage of the carbon-nitrogen bond in imidazolone-5-propanoate to yield N-formimidoyl-L-glutamate. It is the third step in the universal histidine degradation pathway. In Rhodococcus jostii (strain RHA1), this protein is Imidazolonepropionase.